Here is a 66-residue protein sequence, read N- to C-terminus: Small ribosomal subunit protein bS21 (66 aa).

The protein belongs to the bacterial ribosomal protein bS21 family.

This is Small ribosomal subunit protein bS21 from Bdellovibrio bacteriovorus (strain ATCC 15356 / DSM 50701 / NCIMB 9529 / HD100).